A 347-amino-acid polypeptide reads, in one-letter code: GMP reductase (347 aa).

108 to 131 (ADFIKLSEILAMSEELNFICIDIA) contacts NADP(+). Positions 181 and 183 each coordinate K(+). C186 serves as the catalytic Thioimidate intermediate. An NADP(+)-binding site is contributed by 216 to 239 (IIGDGGCSCAGDVAKAFGGGADFV).

Belongs to the IMPDH/GMPR family. GuaC type 1 subfamily. In terms of assembly, homotetramer.

It catalyses the reaction IMP + NH4(+) + NADP(+) = GMP + NADPH + 2 H(+). Catalyzes the irreversible NADPH-dependent deamination of GMP to IMP. It functions in the conversion of nucleobase, nucleoside and nucleotide derivatives of G to A nucleotides, and in maintaining the intracellular balance of A and G nucleotides. The sequence is that of GMP reductase from Shewanella halifaxensis (strain HAW-EB4).